Reading from the N-terminus, the 217-residue chain is Cytidylate kinase (217 aa).

Residue 11–19 (GPAGAGKST) participates in ATP binding.

This sequence belongs to the cytidylate kinase family. Type 1 subfamily.

It localises to the cytoplasm. It catalyses the reaction CMP + ATP = CDP + ADP. The catalysed reaction is dCMP + ATP = dCDP + ADP. The chain is Cytidylate kinase from Clostridium perfringens (strain ATCC 13124 / DSM 756 / JCM 1290 / NCIMB 6125 / NCTC 8237 / Type A).